Reading from the N-terminus, the 401-residue chain is Canavanine gamma-lyase (401 aa).

Lysine 214 carries the post-translational modification N6-(pyridoxal phosphate)lysine.

This sequence belongs to the trans-sulfuration enzymes family. Pyridoxal 5'-phosphate serves as cofactor.

It carries out the reaction L-canavanine + H2O = N-hydroxyguanidine + L-homoserine. Its function is as follows. Lyase involved in the degradation of canavanine, the delta-oxa-analog of arginine, allowing growth on canavanine as sole nitrogen and carbon source. Catalyzes the elimination of hydroxyguanidine from canavanine with a subsequent water addition to yield homoserine. This is Canavanine gamma-lyase from Rhizobium leguminosarum bv. trifolii (strain WSM2304).